Reading from the N-terminus, the 172-residue chain is Oleosin 18 kDa (172 aa).

N-acetylalanine is present on alanine 2. A polar region spans residues 2 to 38 (ADRDRAGQYYQQQRGQVGETVKGILPEKAPSASQALT). The tract at residues 39 to 110 (VATLFPLGGL…GGLSSLTFLA (72 aa)) is hydrophobic. 3 helical membrane-spanning segments follow: residues 42–62 (LFPL…ASVV), 70–90 (VFLI…LAVA), and 91–111 (GFLT…FLAN). The segment at 147–172 (HAIQGRADQAGTGAGAGGGAGTKTSS) is disordered. The span at 158–172 (TGAGAGGGAGTKTSS) shows a compositional bias: gly residues.

It belongs to the oleosin family.

It is found in the lipid droplet. Its subcellular location is the membrane. May have a structural role to stabilize the lipid body during desiccation of the seed by preventing coalescence of the oil. Probably interacts with both lipid and phospholipid moieties of lipid bodies. May also provide recognition signals for specific lipase anchorage in lipolysis during seedling growth. The chain is Oleosin 18 kDa (OLE18) from Oryza sativa subsp. indica (Rice).